The sequence spans 354 residues: Probable calcium-binding protein CML50 (354 aa).

Low complexity-rich tracts occupy residues 1–10 (MSGYPPTSQG) and 28–71 (YSSG…SSYG). The disordered stretch occupies residues 1-159 (MSGYPPTSQG…PASSGHGGGY (159 aa)). The span at 72–81 (APPPSAPYAP) shows a compositional bias: pro residues. The span at 106 to 117 (GSSDYGSYGAGP) shows a compositional bias: low complexity. 2 consecutive EF-hand domains span residues 183-218 (GTDP…YQQR) and 249-284 (YSLQ…LGFS). Positions 196, 198, 200, 207, 262, 264, 266, 268, and 273 each coordinate Ca(2+).

In terms of biological role, potential calcium sensor. The sequence is that of Probable calcium-binding protein CML50 (CML50) from Arabidopsis thaliana (Mouse-ear cress).